Here is a 366-residue protein sequence, read N- to C-terminus: ERCC4 domain-containing protein EP364R (366 aa).

In terms of domain architecture, ERCC4 spans 3 to 101; it reads FLVADHREHH…QLYFFVEGPA (99 aa).

The protein belongs to the asfivirus EP364R family.

Functionally, plays a role in the inhibition of type I interferon signaling pathway. Mechanistically, specifically interacts with 2',3'-cGAMP and cleaves it via its phosphodiesterase activity. In turn, prevents 2',3'-cGAMP interaction with host ER-resident STING1 leading to inhibition of downstream signaling pathway and type I interferon production. This is ERCC4 domain-containing protein EP364R from African swine fever virus (isolate Pig/Kenya/KEN-50/1950) (ASFV).